A 503-amino-acid chain; its full sequence is Glutamate--tRNA ligase (503 aa).

The 'HIGH' region motif lies at 15–25; it reads PSPTGYLHVGG. A 'KMSKS' region motif is present at residues 262 to 266; the sequence is KLSKR. Lysine 265 lines the ATP pocket.

It belongs to the class-I aminoacyl-tRNA synthetase family. Glutamate--tRNA ligase type 1 subfamily. As to quaternary structure, monomer.

It is found in the cytoplasm. It catalyses the reaction tRNA(Glu) + L-glutamate + ATP = L-glutamyl-tRNA(Glu) + AMP + diphosphate. In terms of biological role, catalyzes the attachment of glutamate to tRNA(Glu) in a two-step reaction: glutamate is first activated by ATP to form Glu-AMP and then transferred to the acceptor end of tRNA(Glu). This is Glutamate--tRNA ligase from Prosthecochloris aestuarii (strain DSM 271 / SK 413).